The following is a 347-amino-acid chain: Protein RecA (347 aa).

67 to 74 (GPESSGKT) lines the ATP pocket.

Belongs to the RecA family.

Its subcellular location is the cytoplasm. Its function is as follows. Can catalyze the hydrolysis of ATP in the presence of single-stranded DNA, the ATP-dependent uptake of single-stranded DNA by duplex DNA, and the ATP-dependent hybridization of homologous single-stranded DNAs. It interacts with LexA causing its activation and leading to its autocatalytic cleavage. The protein is Protein RecA of Helicobacter pylori (strain HPAG1).